A 201-amino-acid polypeptide reads, in one-letter code: Small ribosomal subunit protein uS4c (201 aa).

Residues 15-43 are disordered; sequence LGALPGLTSKRPTPGSDLRNQSRSGKRSQ. Residues 89–149 form the S4 RNA-binding domain; the sequence is MRLDNILFRL…DEQKSRALIQ (61 aa).

The protein belongs to the universal ribosomal protein uS4 family. Part of the 30S ribosomal subunit. Contacts protein S5. The interaction surface between S4 and S5 is involved in control of translational fidelity.

The protein localises to the plastid. The protein resides in the chloroplast. Functionally, one of the primary rRNA binding proteins, it binds directly to 16S rRNA where it nucleates assembly of the body of the 30S subunit. With S5 and S12 plays an important role in translational accuracy. The protein is Small ribosomal subunit protein uS4c (rps4) of Nandina domestica (Heavenly bamboo).